We begin with the raw amino-acid sequence, 197 residues long: ATP synthase subunit delta (197 aa).

This sequence belongs to the ATPase delta chain family. In terms of assembly, F-type ATPases have 2 components, F(1) - the catalytic core - and F(0) - the membrane proton channel. F(1) has five subunits: alpha(3), beta(3), gamma(1), delta(1), epsilon(1). F(0) has three main subunits: a(1), b(2) and c(10-14). The alpha and beta chains form an alternating ring which encloses part of the gamma chain. F(1) is attached to F(0) by a central stalk formed by the gamma and epsilon chains, while a peripheral stalk is formed by the delta and b chains.

The protein resides in the cell inner membrane. Functionally, f(1)F(0) ATP synthase produces ATP from ADP in the presence of a proton or sodium gradient. F-type ATPases consist of two structural domains, F(1) containing the extramembraneous catalytic core and F(0) containing the membrane proton channel, linked together by a central stalk and a peripheral stalk. During catalysis, ATP synthesis in the catalytic domain of F(1) is coupled via a rotary mechanism of the central stalk subunits to proton translocation. This protein is part of the stalk that links CF(0) to CF(1). It either transmits conformational changes from CF(0) to CF(1) or is implicated in proton conduction. This chain is ATP synthase subunit delta, found in Bartonella henselae (strain ATCC 49882 / DSM 28221 / CCUG 30454 / Houston 1) (Rochalimaea henselae).